Reading from the N-terminus, the 152-residue chain is Regulatory protein RecX (152 aa).

This sequence belongs to the RecX family.

The protein localises to the cytoplasm. Its function is as follows. Modulates RecA activity. The protein is Regulatory protein RecX of Haemophilus influenzae (strain PittGG).